The following is a 405-amino-acid chain: Multidrug resistance protein MdtH (405 aa).

Helical transmembrane passes span 13-33 (YFLL…FPLI), 34-54 (SIRF…ALGL), 78-95 (MIIA…LMGI), 99-116 (PWLL…GTLF), 139-159 (LLMM…SWLL), 165-185 (LVCL…AWLL), 213-233 (YVLT…MLPI), 243-263 (AAVK…LYPI), 277-297 (LMAG…IEDL), 299-319 (ALFM…PARE), 340-360 (LGLA…YDVG), and 365-385 (IPQL…LGLY).

Belongs to the major facilitator superfamily. DHA1 family. MdtH (TC 2.A.1.2.21) subfamily.

The protein resides in the cell inner membrane. This Sodalis glossinidius (strain morsitans) protein is Multidrug resistance protein MdtH.